We begin with the raw amino-acid sequence, 292 residues long: Acetylglutamate kinase (292 aa).

Residues 64–65 (GG), arginine 86, and asparagine 190 contribute to the substrate site.

Belongs to the acetylglutamate kinase family. ArgB subfamily.

It localises to the cytoplasm. It carries out the reaction N-acetyl-L-glutamate + ATP = N-acetyl-L-glutamyl 5-phosphate + ADP. It functions in the pathway amino-acid biosynthesis; L-arginine biosynthesis; N(2)-acetyl-L-ornithine from L-glutamate: step 2/4. In terms of biological role, catalyzes the ATP-dependent phosphorylation of N-acetyl-L-glutamate. In Geotalea daltonii (strain DSM 22248 / JCM 15807 / FRC-32) (Geobacter daltonii), this protein is Acetylglutamate kinase.